Here is a 510-residue protein sequence, read N- to C-terminus: Histidine ammonia-lyase (510 aa).

The segment at residues 143 to 145 is a cross-link (5-imidazolinone (Ala-Gly)); sequence ASG. Position 144 is a 2,3-didehydroalanine (Ser) (Ser144).

It belongs to the PAL/histidase family. In terms of processing, contains an active site 4-methylidene-imidazol-5-one (MIO), which is formed autocatalytically by cyclization and dehydration of residues Ala-Ser-Gly.

Its subcellular location is the cytoplasm. It catalyses the reaction L-histidine = trans-urocanate + NH4(+). Its pathway is amino-acid degradation; L-histidine degradation into L-glutamate; N-formimidoyl-L-glutamate from L-histidine: step 1/3. The polypeptide is Histidine ammonia-lyase (Shewanella piezotolerans (strain WP3 / JCM 13877)).